The chain runs to 187 residues: Orotate phosphoribosyltransferase (187 aa).

5-phospho-alpha-D-ribose 1-diphosphate contacts are provided by residues arginine 98, lysine 99, lysine 102, histidine 104, and 128–136 (EDVTTTGGS). Threonine 132 and arginine 160 together coordinate orotate.

The protein belongs to the purine/pyrimidine phosphoribosyltransferase family. PyrE subfamily. Homodimer. It depends on Mg(2+) as a cofactor.

It carries out the reaction orotidine 5'-phosphate + diphosphate = orotate + 5-phospho-alpha-D-ribose 1-diphosphate. The protein operates within pyrimidine metabolism; UMP biosynthesis via de novo pathway; UMP from orotate: step 1/2. Its function is as follows. Catalyzes the transfer of a ribosyl phosphate group from 5-phosphoribose 1-diphosphate to orotate, leading to the formation of orotidine monophosphate (OMP). The sequence is that of Orotate phosphoribosyltransferase from Rhodopseudomonas palustris (strain TIE-1).